The primary structure comprises 235 residues: Small ribosomal subunit protein uS3 (235 aa).

One can recognise a KH type-2 domain in the interval 39-107 (IRDFIKKECH…ELHLNIVEVR (69 aa)). The segment at 213 to 235 (AARDRKAQELQDGPAPRGAGGRR) is disordered.

The protein belongs to the universal ribosomal protein uS3 family. As to quaternary structure, part of the 30S ribosomal subunit. Forms a tight complex with proteins S10 and S14.

Its function is as follows. Binds the lower part of the 30S subunit head. Binds mRNA in the 70S ribosome, positioning it for translation. In Roseobacter denitrificans (strain ATCC 33942 / OCh 114) (Erythrobacter sp. (strain OCh 114)), this protein is Small ribosomal subunit protein uS3.